Here is a 157-residue protein sequence, read N- to C-terminus: Crossover junction endodeoxyribonuclease RuvC (157 aa).

Residues D7, E66, and D139 contribute to the active site. Mg(2+) is bound by residues D7, E66, and D139.

The protein belongs to the RuvC family. Homodimer which binds Holliday junction (HJ) DNA. The HJ becomes 2-fold symmetrical on binding to RuvC with unstacked arms; it has a different conformation from HJ DNA in complex with RuvA. In the full resolvosome a probable DNA-RuvA(4)-RuvB(12)-RuvC(2) complex forms which resolves the HJ. Mg(2+) is required as a cofactor.

It is found in the cytoplasm. The catalysed reaction is Endonucleolytic cleavage at a junction such as a reciprocal single-stranded crossover between two homologous DNA duplexes (Holliday junction).. Its function is as follows. The RuvA-RuvB-RuvC complex processes Holliday junction (HJ) DNA during genetic recombination and DNA repair. Endonuclease that resolves HJ intermediates. Cleaves cruciform DNA by making single-stranded nicks across the HJ at symmetrical positions within the homologous arms, yielding a 5'-phosphate and a 3'-hydroxyl group; requires a central core of homology in the junction. The consensus cleavage sequence is 5'-(A/T)TT(C/G)-3'. Cleavage occurs on the 3'-side of the TT dinucleotide at the point of strand exchange. HJ branch migration catalyzed by RuvA-RuvB allows RuvC to scan DNA until it finds its consensus sequence, where it cleaves and resolves the cruciform DNA. This chain is Crossover junction endodeoxyribonuclease RuvC, found in Helicobacter pylori (strain ATCC 700392 / 26695) (Campylobacter pylori).